We begin with the raw amino-acid sequence, 334 residues long: N,N'-diacetyllegionaminic acid synthase (334 aa).

Residues 282–334 enclose the AFP-like domain; the sequence is SLVAKKDIKKGEIFSEGNLTTKRPANGISAMRYEEFLGKIATKNYKEDELIRE.

The catalysed reaction is 2,4-diacetamido-2,4,6-trideoxy-alpha-D-mannopyranose + phosphoenolpyruvate + H2O = N,N-diacetyllegionaminate + phosphate. In terms of biological role, involved in biosynthesis of legionaminic acid (5,7-diamino-3,5,7,9-tetradeoxy-D-glycero-D-galacto-non-2-ulosonic acid)(Leg), a sialic acid-like derivative that is incorporated into flagellin via O-linkage to Ser/Thr. Catalyzes the condensation of 2,4-diacetamido-2,4,6-trideoxymannose with phosphoenolpyruvate (PEP) to give N,N'-diacetyllegionaminic acid. This Campylobacter jejuni subsp. jejuni serotype O:2 (strain ATCC 700819 / NCTC 11168) protein is N,N'-diacetyllegionaminic acid synthase (legI).